The following is a 476-amino-acid chain: Protein transport protein Sec61 subunit alpha isoform 1 (476 aa).

The Cytoplasmic portion of the chain corresponds to 1–33 (MAIKFLEVIKPFCVILPEIQKPERKIQFKEKVL). A helical membrane pass occupies residues 34–53 (WTAITLFIFLVCCQIPLFGI). Topologically, residues 54-76 (MSSDSADPFYWMRVILASNRGTL) are lumenal. The chain crosses the membrane as a helical span at residues 77–96 (MELGISPIVTSGLIMQLLAG). Topologically, residues 97–117 (AKIIEVGDTPKDRALFNGAQK) are cytoplasmic. The helical transmembrane segment at 118 to 138 (LFGMIITIGQSIVYVMTGMYG) threads the bilayer. The Lumenal portion of the chain corresponds to 139 to 144 (DPSEMG). The helical transmembrane segment at 145–165 (AGICLLITIQLFVAGLIVLLL) threads the bilayer. At 166 to 172 (DELLQKG) the chain is on the cytoplasmic side. The helical transmembrane segment at 173-193 (YGLGSGISLFIATNICETIVW) threads the bilayer. Topologically, residues 194–240 (KAFSPTTVNTGRGMEFEGAIIALFHLLATRTDKVRALREAFYRQNLP) are lumenal. The helical transmembrane segment at 241 to 261 (NLMNLIATIFVFAVVIYFQGF) threads the bilayer. Topologically, residues 262–288 (RVDLPIKSARYRGQYNTYPIKLFYTSN) are cytoplasmic. Residues 289 to 309 (IPIILQSALVSNLYVISQMLS) traverse the membrane as a helical segment. At 310-354 (ARFSGNLLVSLLGTWSDTSSGGPARAYPVGGLCYYLSPPESFGSV) the chain is on the lumenal side. A helical transmembrane segment spans residues 355–375 (LEDPVHAVVYIVFMLGSCAFF). Residues 376 to 420 (SKTWIEVSGSSAKDVAKQLKEQQMVMRGHRETSMVHELNRYIPTA) are Cytoplasmic-facing. A helical transmembrane segment spans residues 421-441 (AAFGGLCIGALSVLADFLGAI). Topologically, residues 442–445 (GSGT) are lumenal. A helical membrane pass occupies residues 446–462 (GILLAVTIIYQYFEIFV). Over 463 to 476 (KEQSEVGSMGALLF) the chain is Cytoplasmic.

The protein belongs to the SecY/SEC61-alpha family. As to quaternary structure, the SEC61 channel-forming translocon complex consists of channel-forming core components SEC61A1, SEC61B and SEC61G and different auxiliary components such as SEC62 and SEC63. The SEC61 channel associates with the multi-pass translocon (MPT) complex. In terms of tissue distribution, expressed in proximal and distal tubules in kidney (at protein level).

It localises to the endoplasmic reticulum membrane. In terms of biological role, component of SEC61 channel-forming translocon complex that mediates transport of signal peptide-containing precursor polypeptides across the endoplasmic reticulum (ER). Forms a ribosome receptor and a gated pore in the ER membrane, both functions required for cotranslational translocation of nascent polypeptides. May cooperate with auxiliary protein SEC62, SEC63 and HSPA5/BiP to enable post-translational transport of small presecretory proteins. The SEC61 channel is also involved in ER membrane insertion of transmembrane proteins: it mediates membrane insertion of the first few transmembrane segments of proteins, while insertion of subsequent transmembrane regions of multi-pass membrane proteins is mediated by the multi-pass translocon (MPT) complex. The SEC61 channel cooperates with the translocating protein TRAM1 to import nascent proteins into the ER. Controls the passive efflux of calcium ions from the ER lumen to the cytosol through SEC61 channel, contributing to the maintenance of cellular calcium homeostasis. Plays a critical role in nephrogenesis, specifically at pronephros stage. The protein is Protein transport protein Sec61 subunit alpha isoform 1 (SEC61A1) of Homo sapiens (Human).